We begin with the raw amino-acid sequence, 749 residues long: Cytosolic phospholipase A2 (749 aa).

Residues 1–178 are phospholipid binding; sequence MSFIDPYQHI…MKKLLGPKNS (178 aa). A Phosphoserine modification is found at serine 2. Residues 6–122 form the C2 domain; that stretch reads PYQHIIVEHH…KVGEKKQVPF (117 aa). Ca(2+) is bound by residues aspartate 40, threonine 41, aspartate 43, asparagine 65, aspartate 93, alanine 94, and asparagine 95. The PLA2c domain occupies 140 to 740; it reads SSPDLRFSMA…SSVEARRFFN (601 aa). The active-site Nucleophile is serine 228. Threonine 268 carries the post-translational modification Phosphothreonine. The interval 426 to 458 is disordered; that stretch reads AKHIVSNDSSDSDDESQGPKGTEHEEAEREYQN. Serine 434, serine 435, and serine 437 each carry phosphoserine. Basic and acidic residues predominate over residues 446-457; that stretch reads GTEHEEAEREYQ. Serine 505 carries the post-translational modification Phosphoserine; by MAPK. The residue at position 515 (serine 515) is a Phosphoserine. Residue lysine 541 forms a Glycyl lysine isopeptide (Lys-Gly) (interchain with G-Cter in SUMO2) linkage. The Proton acceptor role is filled by aspartate 549. Residue lysine 606 forms a Glycyl lysine isopeptide (Lys-Gly) (interchain with G-Cter in SUMO2) linkage. Serine 727 and serine 729 each carry phosphoserine.

As to quaternary structure, interacts with KAT5. Phosphorylated at both Ser-505 and Ser-727 in response to mitogenic stimuli. As to expression, detected in granulosa cells after stimulation with chorionic gonadotropin (at protein level).

Its subcellular location is the cytoplasm. The protein localises to the golgi apparatus membrane. The protein resides in the nucleus envelope. It catalyses the reaction a 1,2-diacyl-sn-glycero-3-phosphocholine + H2O = a 1-acyl-sn-glycero-3-phosphocholine + a fatty acid + H(+). It carries out the reaction a 1-O-alkyl-2-acyl-sn-glycero-3-phosphocholine + H2O = a 1-O-alkyl-sn-glycero-3-phosphocholine + a fatty acid + H(+). The catalysed reaction is a 1-acyl-sn-glycero-3-phosphocholine + H2O = sn-glycerol 3-phosphocholine + a fatty acid + H(+). The enzyme catalyses 1-hexadecanoyl-2-(5Z,8Z,11Z,14Z-eicosatetraenoyl)-sn-glycero-3-phosphocholine + H2O = 1-hexadecanoyl-sn-glycero-3-phosphocholine + (5Z,8Z,11Z,14Z)-eicosatetraenoate + H(+). It catalyses the reaction 1,2-di-(5Z,8Z,11Z,14Z-eicosatetraenoyl)-sn-glycero-3-phosphocholine + H2O = 1-(5Z,8Z,11Z,14Z-eicosatetraenoyl)-sn-glycero-3-phosphocholine + (5Z,8Z,11Z,14Z)-eicosatetraenoate + H(+). It carries out the reaction 1-octadecanoyl-2-(5Z,8Z,11Z,14Z-eicosatetraenoyl)-sn-glycero-3-phosphocholine + H2O = 1-octadecanoyl-sn-glycero-3-phosphocholine + (5Z,8Z,11Z,14Z)-eicosatetraenoate + H(+). The catalysed reaction is 1-hexadecanoyl-2-(9Z,12Z-octadecadienoyl)-sn-glycero-3-phosphocholine + H2O = (9Z,12Z)-octadecadienoate + 1-hexadecanoyl-sn-glycero-3-phosphocholine + H(+). The enzyme catalyses 1-octadecanoyl-2-(9Z,12Z,15Z-octadecatrienoyl)-sn-glycero-3-phosphocholine + H2O = (9Z,12Z,15Z)-octadecatrienoate + 1-octadecanoyl-sn-glycero-3-phosphocholine + H(+). It catalyses the reaction 1-(5Z,8Z,11Z,14Z-eicosatetraenoyl)-2-hexadecanoyl-sn-glycero-3-phosphocholine + H2O = 1-(5Z,8Z,11Z,14Z-eicosatetraenoyl)-sn-glycero-3-phosphocholine + hexadecanoate + H(+). It carries out the reaction 1-O-hexadecyl-2-(5Z,8Z,11Z,14Z)-eicosatetraenoyl-sn-glycero-3-phosphocholine + H2O = 1-O-hexadecyl-sn-glycero-3-phosphocholine + (5Z,8Z,11Z,14Z)-eicosatetraenoate + H(+). The catalysed reaction is 1,2-di-(9Z-octadecenoyl)-sn-glycero-3-phospho-(1'-sn-glycerol) + H2O = 1-(9Z-octadecenoyl)-sn-glycero-3-phospho-(1'-sn-glycerol) + (9Z)-octadecenoate + H(+). The enzyme catalyses 1-octadecanoyl-2-(5Z,8Z,11Z,14Z-eicosatetraenoyl)-sn-glycero-3-phosphate + H2O = 1-octadecanoyl-sn-glycero-3-phosphate + (5Z,8Z,11Z,14Z)-eicosatetraenoate + H(+). It catalyses the reaction 1-hexadecanoyl-sn-glycero-3-phosphocholine + H2O = sn-glycerol 3-phosphocholine + hexadecanoate + H(+). It carries out the reaction 2-(prostaglandin E2)-sn-glycero-3-phosphoethanolamine + H2O = sn-glycero-3-phosphoethanolamine + prostaglandin E2 + H(+). The catalysed reaction is 2-[(15S)-hydroxy-(5Z,8Z,11Z,13E)-eicosatetraenoyl]-sn-glycero-3-phosphocholine + H2O = (15S)-hydroxy-(5Z,8Z,11Z,13E)-eicosatetraenoate + sn-glycerol 3-phosphocholine + H(+). The enzyme catalyses 2-[(15R)-hydroxy-(5Z,8Z,11Z,13E)-eicosatetraenoyl]-sn-glycero-3-phosphocholine + H2O = (15R)-hydroxy-(5Z,8Z,11Z,13E)-eicosatetraenoate + sn-glycerol 3-phosphocholine + H(+). It catalyses the reaction 2-(prostaglandin E2)-sn-glycero-3-phosphocholine + H2O = prostaglandin E2 + sn-glycerol 3-phosphocholine + H(+). It carries out the reaction 2-[(11R)-hydroxy-(5Z,8Z,12E,14Z)-eicosatetraenoyl]-sn-glycero-3-phosphocholine + H2O = (11R)-hydroxy-(5Z,8Z,12E,14Z)-eicosatetraenoate + sn-glycerol 3-phosphocholine + H(+). The catalysed reaction is 1-(5Z,8Z,11Z,14Z-eicosatetraenoyl)-2-O-hexadecyl-sn-glycero-3-phosphocholine + H2O = 2-O-hexadecyl-sn-glycero-3-phosphocholine + (5Z,8Z,11Z,14Z)-eicosatetraenoate + H(+). The enzyme catalyses 1-octadecanoyl-2-(5Z,8Z,11Z,14Z-eicosatetraenoyl)-sn-glycero-3-phosphocholine + glycerol = 1-(5Z,8Z,11Z,14Z-eicosatetraenoyl)-glycerol + 1-octadecanoyl-sn-glycero-3-phosphocholine. It catalyses the reaction 1-octadecanoyl-2-(9Z,12Z,15Z-octadecatrienoyl)-sn-glycero-3-phosphocholine + glycerol = 1-(9Z,12Z,15Z-octadecatrienoyl)-glycerol + 1-octadecanoyl-sn-glycero-3-phosphocholine. It participates in membrane lipid metabolism; glycerophospholipid metabolism. Its pathway is lipid metabolism; arachidonate metabolism. The protein operates within lipid metabolism; prostaglandin biosynthesis. It functions in the pathway lipid metabolism; leukotriene B4 biosynthesis. Activated by cytosolic calcium, which is necessary for binding to membrane lipids. Activated by phosphorylation in response to mitogenic stimuli. Its function is as follows. Has primarily calcium-dependent phospholipase and lysophospholipase activities, with a major role in membrane lipid remodeling and biosynthesis of lipid mediators of the inflammatory response. Plays an important role in embryo implantation and parturition through its ability to trigger prostanoid production. Preferentially hydrolyzes the ester bond of the fatty acyl group attached at sn-2 position of phospholipids (phospholipase A2 activity). Selectively hydrolyzes sn-2 arachidonoyl group from membrane phospholipids, providing the precursor for eicosanoid biosynthesis via the cyclooxygenase pathway. In an alternative pathway of eicosanoid biosynthesis, hydrolyzes sn-2 fatty acyl chain of eicosanoid lysophopholipids to release free bioactive eicosanoids. Hydrolyzes the ester bond of the fatty acyl group attached at sn-1 position of phospholipids (phospholipase A1 activity) only if an ether linkage rather than an ester linkage is present at the sn-2 position. This hydrolysis is not stereospecific. Has calcium-independent phospholipase A2 and lysophospholipase activities in the presence of phosphoinositides. Has O-acyltransferase activity. Catalyzes the transfer of fatty acyl chains from phospholipids to a primary hydroxyl group of glycerol (sn-1 or sn-3), potentially contributing to monoacylglycerol synthesis. This is Cytosolic phospholipase A2 (PLA2G4A) from Bos taurus (Bovine).